A 616-amino-acid chain; its full sequence is Glutamine--fructose-6-phosphate aminotransferase [isomerizing] (616 aa).

Cysteine 2 (nucleophile; for GATase activity) is an active-site residue. In terms of domain architecture, Glutamine amidotransferase type-2 spans 2–222 (CGIIGYSGPR…QERIVALSGD (221 aa)). The disordered stretch occupies residues 70–89 (TGIGHTRWATHGEPSDRNAH). 2 SIS domains span residues 289-428 (IRDD…LRGF) and 461-606 (LAHW…VDRP). Lysine 611 functions as the For Fru-6P isomerization activity in the catalytic mechanism.

Homodimer.

The protein localises to the cytoplasm. The enzyme catalyses D-fructose 6-phosphate + L-glutamine = D-glucosamine 6-phosphate + L-glutamate. Catalyzes the first step in hexosamine metabolism, converting fructose-6P into glucosamine-6P using glutamine as a nitrogen source. This is Glutamine--fructose-6-phosphate aminotransferase [isomerizing] from Tropheryma whipplei (strain TW08/27) (Whipple's bacillus).